The chain runs to 433 residues: Enolase (433 aa).

Residue Q167 coordinates (2R)-2-phosphoglycerate. The active-site Proton donor is E209. 3 residues coordinate Mg(2+): D246, E291, and D318. Residues K343, R372, S373, and K394 each contribute to the (2R)-2-phosphoglycerate site. The active-site Proton acceptor is K343.

It belongs to the enolase family. As to quaternary structure, component of the RNA degradosome, a multiprotein complex involved in RNA processing and mRNA degradation. Mg(2+) is required as a cofactor.

It is found in the cytoplasm. Its subcellular location is the secreted. The protein localises to the cell surface. The catalysed reaction is (2R)-2-phosphoglycerate = phosphoenolpyruvate + H2O. It functions in the pathway carbohydrate degradation; glycolysis; pyruvate from D-glyceraldehyde 3-phosphate: step 4/5. In terms of biological role, catalyzes the reversible conversion of 2-phosphoglycerate (2-PG) into phosphoenolpyruvate (PEP). It is essential for the degradation of carbohydrates via glycolysis. This is Enolase from Shewanella frigidimarina (strain NCIMB 400).